Consider the following 418-residue polypeptide: Histidine--tRNA ligase (418 aa).

It belongs to the class-II aminoacyl-tRNA synthetase family.

It is found in the cytoplasm. The catalysed reaction is tRNA(His) + L-histidine + ATP = L-histidyl-tRNA(His) + AMP + diphosphate + H(+). This chain is Histidine--tRNA ligase, found in Methanococcus maripaludis (strain C7 / ATCC BAA-1331).